Reading from the N-terminus, the 942-residue chain is Genome polyprotein (942 aa).

The Peptidase C4 domain occupies 1–90 (ETEITPYGEN…VDVGGLYIHN (90 aa)). The For nuclear inclusion protein A activity role is filled by cysteine 26. The RdRp catalytic domain occupies 349–472 (EWFIDADGSQ…NANEEAKEVV (124 aa)). A disordered region spans residues 633 to 678 (NATSTSDTIPPARNVGADTTTPAKANPPSGRRPSSRSLIDNSIGGN). A compositionally biased stretch (low complexity) spans 659–669 (PPSGRRPSSRS).

It belongs to the potyviridae genome polyprotein family. Post-translationally, genome polyprotein of potyviruses undergoes post-translational proteolytic processing by the main proteinase NIa-pro resulting in the production of at least ten individual proteins. The P1 proteinase and the HC-pro cleave only their respective C-termini autocatalytically. 6K1 is essential for proper proteolytic separation of P3 from CI.

Its subcellular location is the virion. It carries out the reaction RNA(n) + a ribonucleoside 5'-triphosphate = RNA(n+1) + diphosphate. It catalyses the reaction Hydrolyzes glutaminyl bonds, and activity is further restricted by preferences for the amino acids in P6 - P1' that vary with the species of potyvirus, e.g. Glu-Xaa-Xaa-Tyr-Xaa-Gln-|-(Ser or Gly) for the enzyme from tobacco etch virus. The natural substrate is the viral polyprotein, but other proteins and oligopeptides containing the appropriate consensus sequence are also cleaved.. Its function is as follows. Has RNA-binding and proteolytic activities. Functionally, an RNA-dependent RNA polymerase that plays an essential role in the virus replication. Involved in aphid transmission, cell-to-cell and systemis movement, encapsidation of the viral RNA and in the regulation of viral RNA amplification. The sequence is that of Genome polyprotein from Brome streak virus (strain German) (BStV).